The following is a 477-amino-acid chain: Bifunctional protein HldE (477 aa).

The segment at 1–318 is ribokinase; that stretch reads MQIQLPMFQN…RRAVQQEQGA (318 aa). Residue 195–198 coordinates ATP; that stretch reads NLSE. Asp264 is an active-site residue. The interval 344–477 is cytidylyltransferase; sequence FTNGCFDIIH…VEKIRKDQVK (134 aa).

This sequence in the N-terminal section; belongs to the carbohydrate kinase PfkB family. The protein in the C-terminal section; belongs to the cytidylyltransferase family. In terms of assembly, homodimer.

The catalysed reaction is D-glycero-beta-D-manno-heptose 7-phosphate + ATP = D-glycero-beta-D-manno-heptose 1,7-bisphosphate + ADP + H(+). It carries out the reaction D-glycero-beta-D-manno-heptose 1-phosphate + ATP + H(+) = ADP-D-glycero-beta-D-manno-heptose + diphosphate. It functions in the pathway nucleotide-sugar biosynthesis; ADP-L-glycero-beta-D-manno-heptose biosynthesis; ADP-L-glycero-beta-D-manno-heptose from D-glycero-beta-D-manno-heptose 7-phosphate: step 1/4. Its pathway is nucleotide-sugar biosynthesis; ADP-L-glycero-beta-D-manno-heptose biosynthesis; ADP-L-glycero-beta-D-manno-heptose from D-glycero-beta-D-manno-heptose 7-phosphate: step 3/4. Functionally, catalyzes the phosphorylation of D-glycero-D-manno-heptose 7-phosphate at the C-1 position to selectively form D-glycero-beta-D-manno-heptose-1,7-bisphosphate. Catalyzes the ADP transfer from ATP to D-glycero-beta-D-manno-heptose 1-phosphate, yielding ADP-D-glycero-beta-D-manno-heptose. This is Bifunctional protein HldE from Hahella chejuensis (strain KCTC 2396).